A 387-amino-acid chain; its full sequence is MGDIEFKSSPEFSLGMEIELQLLNPDTLQLVDGISPLLAQTPENSWIQPEFNQAMVEIASQVCSNIPELEANIVAILRDLKTRCQALGMTICTAGTYPCCDRFASITPIPRYLSQQNTSGYLADLMMTCALQLHVGMPSGDVAIDIMGRLKPYLPILLALSASSPFWWGHDTSFASFRQRFLSSMRTYGICPTFKNWQDFTNFFATAQNAGMFEIIRDIHWDLRPQPDFGTLEVRVMDAQPTIKESMMLAAFIHSLIVDMYHHSQGKQTEFLLTPLPWLIERENYFRASRWGLDANYIEDEQGNSRPIRNIVKDILNVLAETADTLGNSSYLFQLEKRLDQGASYIRQRRVFESTGSVKAVVASLVSELEAELAIKSRQEAVAYGWL.

It belongs to the glutamate--cysteine ligase type 2 family. YbdK subfamily.

It carries out the reaction L-cysteine + L-glutamate + ATP = gamma-L-glutamyl-L-cysteine + ADP + phosphate + H(+). Its function is as follows. ATP-dependent carboxylate-amine ligase which exhibits weak glutamate--cysteine ligase activity. This Trichormus variabilis (strain ATCC 29413 / PCC 7937) (Anabaena variabilis) protein is Putative glutamate--cysteine ligase 2.